Reading from the N-terminus, the 395-residue chain is Thyrotropin-releasing hormone receptor (395 aa).

At 1-30 (MENGTGDEQNHTGLLLSSQEFVTAEYQVVT) the chain is on the extracellular side. N3 and N10 each carry an N-linked (GlcNAc...) asparagine glycan. Residues 31-53 (ILLVLLICGLGIVGNIMVVLVVL) traverse the membrane as a helical segment. Topologically, residues 54-63 (RTKHMRTPTN) are cytoplasmic. Residues 64–85 (CYLVSLAVADLMVLVAAGLPNI) form a helical membrane-spanning segment. Over 86 to 101 (TESLYKSWVYGYVGCL) the chain is Extracellular. C100 and C181 form a disulfide bridge. The helical transmembrane segment at 102–123 (CITYLQYLGINASSFSITAFTI) threads the bilayer. Residues 124–146 (ERYIAICHPIKAQFLCTFSRAKK) are Cytoplasmic-facing. A helical membrane pass occupies residues 147-170 (IIIFVWSFASVYCMLWFFLLDLNI). The Extracellular segment spans residues 171–195 (AVYKDTTVVSCGYKVSRSYYSPIYM). The chain crosses the membrane as a helical span at residues 196–217 (MDFGIFYVLPMVLATVLYGLIA). The Cytoplasmic segment spans residues 218–268 (RILFLNPIPSDPKENSNTWKNDMAQQNKTVNSKMTNKSFNSTIASRRQVTK). The helical transmembrane segment at 269-290 (MLAVVVVLFAFLWMPYRTLVVV) threads the bilayer. The Extracellular portion of the chain corresponds to 291–298 (NSFLSSPF). A helical transmembrane segment spans residues 299–321 (QENWFLLFCRICIYLNSAINPVI). Residues 322–395 (YNLMSQKFRA…IGDTCLSSEA (74 aa)) are Cytoplasmic-facing.

The protein belongs to the G-protein coupled receptor 1 family.

The protein resides in the cell membrane. In terms of biological role, receptor for thyrotropin-releasing hormone (TRH). Upon ligand binding, this G-protein-coupled receptor triggers activation of the phosphatidylinositol (IP3)-calcium-protein kinase C (PKC) pathway. The protein is Thyrotropin-releasing hormone receptor (TRHR) of Gallus gallus (Chicken).